Reading from the N-terminus, the 93-residue chain is Stromal cell-derived factor 1 (93 aa).

The first 21 residues, 1-21 (MNAKVVVVLVLVLTALCLSDG), serve as a signal peptide directing secretion. The Receptor activation motif signature appears at 22–23 (KP). A receptor and heparin binding region spans residues 29-33 (RCPCR). 2 disulfides stabilise this stretch: Cys30–Cys55 and Cys32–Cys71. 3 receptor binding regions span residues 39–41 (VAR), 48–50 (KIL), and 60–70 (VARLKNNNRQV). Residues 41–51 (RANVKHLKILN), Arg62, Gln69, and Lys85 contribute to the heparin site.

Belongs to the intercrine alpha (chemokine CxC) family. Monomer or homodimer; in equilibrium. Dimer formation is induced by non acidic pH and the presence of multivalent anions, and by binding to CXCR4 or heparin. Monomeric form is required for full chemotactic activity and resistance to ischemia/reperfusion injury, whereas the dimeric form acts as a partial agonist of CXCR4, stimulating Ca2+ mobilization but with no chemotactic activity and instead acts as a selective antagonist that blocks chemotaxis induced by the monomeric form. Interacts with the N-terminus of ACKR3. Interacts with integrin subunit ITGB3 (via the allosteric site (site 2)). Interacts with TNFAIP6 (via Link domain). In terms of assembly, (Microbial infection) Interacts with molluscum contagiosum virus protein MC148. Post-translationally, processed forms SDF-1-beta(3-72) and SDF-1-alpha(3-67) are produced after secretion by proteolytic cleavage of isoforms Beta and Alpha, respectively. The N-terminal processing is probably achieved by DPP4. Isoform Alpha is first cleaved at the C-terminus to yield a SDF-1-alpha(1-67) intermediate before being processed at the N-terminus. The C-terminal processing of isoform Alpha is reduced by binding to heparin and, probably, cell surface proteoglycans. Isoform Alpha and isoform Beta are ubiquitously expressed, with highest levels detected in liver, pancreas and spleen. Isoform Gamma is mainly expressed in heart, with weak expression detected in several other tissues. Isoform Delta, isoform Epsilon and isoform Theta have highest expression levels in pancreas, with lower levels detected in heart, kidney, liver and spleen.

It is found in the secreted. Functionally, chemoattractant active on T-lymphocytes and monocytes but not neutrophils. Activates the C-X-C chemokine receptor CXCR4 to induce a rapid and transient rise in the level of intracellular calcium ions and chemotaxis. SDF-1-beta(3-72) and SDF-1-alpha(3-67) show a reduced chemotactic activity. Binding to cell surface proteoglycans seems to inhibit formation of SDF-1-alpha(3-67) and thus to preserve activity on local sites. Also binds to atypical chemokine receptor ACKR3, which activates the beta-arrestin pathway and acts as a scavenger receptor for SDF-1. Binds to the allosteric site (site 2) of integrins and activates integrins ITGAV:ITGB3, ITGA4:ITGB1 and ITGA5:ITGB1 in a CXCR4-independent manner. Acts as a positive regulator of monocyte migration and a negative regulator of monocyte adhesion via the LYN kinase. Stimulates migration of monocytes and T-lymphocytes through its receptors, CXCR4 and ACKR3, and decreases monocyte adherence to surfaces coated with ICAM-1, a ligand for beta-2 integrins. SDF1A/CXCR4 signaling axis inhibits beta-2 integrin LFA-1 mediated adhesion of monocytes to ICAM-1 through LYN kinase. Inhibits CXCR4-mediated infection by T-cell line-adapted HIV-1. Plays a protective role after myocardial infarction. Induces down-regulation and internalization of ACKR3 expressed in various cells. Has several critical functions during embryonic development; required for B-cell lymphopoiesis, myelopoiesis in bone marrow and heart ventricular septum formation. Stimulates the proliferation of bone marrow-derived B-cell progenitors in the presence of IL7 as well as growth of stromal cell-dependent pre-B-cells. This Homo sapiens (Human) protein is Stromal cell-derived factor 1 (CXCL12).